Reading from the N-terminus, the 364-residue chain is Sulfate/thiosulfate import ATP-binding protein CysA (364 aa).

One can recognise an ABC transporter domain in the interval 3–237 (IEIARIKKSF…PATRFVLEFM (235 aa)). 35-42 (GPSGSGKT) contributes to the ATP binding site.

Belongs to the ABC transporter superfamily. Sulfate/tungstate importer (TC 3.A.1.6) family. The complex is composed of two ATP-binding proteins (CysA), two transmembrane proteins (CysT and CysW) and a solute-binding protein (CysP).

The protein resides in the cell inner membrane. The catalysed reaction is sulfate(out) + ATP + H2O = sulfate(in) + ADP + phosphate + H(+). The enzyme catalyses thiosulfate(out) + ATP + H2O = thiosulfate(in) + ADP + phosphate + H(+). Functionally, part of the ABC transporter complex CysAWTP involved in sulfate/thiosulfate import. Responsible for energy coupling to the transport system. The chain is Sulfate/thiosulfate import ATP-binding protein CysA from Salmonella typhi.